The primary structure comprises 277 residues: Large ribosomal subunit protein uL2c (277 aa).

Residues 225 to 277 (MNPCDHPHGGGEGRSPIGRPKPVTPWGKPALGKKTRSPKRFSNKYIIRSRKMV) form a disordered region. The span at 255–277 (LGKKTRSPKRFSNKYIIRSRKMV) shows a compositional bias: basic residues.

This sequence belongs to the universal ribosomal protein uL2 family. As to quaternary structure, part of the 50S ribosomal subunit.

It localises to the plastid. The protein resides in the chloroplast. This Euglena gracilis protein is Large ribosomal subunit protein uL2c (rpl2).